The sequence spans 446 residues: Tubulin gamma chain (446 aa).

142–148 (AGGTGSG) is a binding site for GTP.

It belongs to the tubulin family. As to quaternary structure, interacts with mto1. Interacts with mto2.

The protein resides in the cytoplasm. It localises to the cytoskeleton. The protein localises to the microtubule organizing center. Its subcellular location is the spindle pole body. In terms of biological role, tubulin is the major constituent of microtubules. The gamma chain is found at microtubule organizing centers (MTOC) such as the spindle poles or the centrosome, suggesting that it is involved in the minus-end nucleation of microtubule assembly. This Schizosaccharomyces pombe (strain 972 / ATCC 24843) (Fission yeast) protein is Tubulin gamma chain.